The chain runs to 196 residues: Vacuolar iron transporter homolog 2 (196 aa).

At 1-31 (MDQSGSNTNMDIEKESTTFDYSKRSQWLRAA) the chain is on the cytoplasmic side. Residues 32-52 (VLGANDGLVSTASLMMGVGAV) form a helical membrane-spanning segment. Residues 53-59 (KHDVKAM) lie on the Vacuolar side of the membrane. Residues 60–80 (ILSGFAGMVAGACSMAIGEFV) traverse the membrane as a helical segment. Residues 81 to 112 (SVYSQYDIEVAQMERDSVEIEKEKLPSPMQAA) lie on the Cytoplasmic side of the membrane. The chain crosses the membrane as a helical span at residues 113–133 (AASALAFSAGAIVPLLAAAFV). Residues 134-139 (KEYKMR) lie on the Vacuolar side of the membrane. The chain crosses the membrane as a helical span at residues 140–160 (IISVVVAVTVALMVFGWLGAA). Residues 161–172 (LGKAPAVRSSAR) are Cytoplasmic-facing. The chain crosses the membrane as a helical span at residues 173–193 (VLFGGWLAMAVTFGLTKLIGL). Topologically, residues 194–196 (YGL) are vacuolar.

The protein belongs to the CCC1 family. Expressed in roots, leaves and inflorescences.

It localises to the vacuole membrane. It carries out the reaction Fe(2+)(in) = Fe(2+)(out). Vacuolar iron transporter involved in the transfer of iron ions from the cytosol to the vacuole for intracellular iron storage. Involved in regulation of cellular iron homeostasis. Vacuolar iron storage is required for seed embryo and seedling development. The chain is Vacuolar iron transporter homolog 2 from Arabidopsis thaliana (Mouse-ear cress).